The chain runs to 261 residues: Indole-3-glycerol phosphate synthase (261 aa).

Belongs to the TrpC family.

The catalysed reaction is 1-(2-carboxyphenylamino)-1-deoxy-D-ribulose 5-phosphate + H(+) = (1S,2R)-1-C-(indol-3-yl)glycerol 3-phosphate + CO2 + H2O. Its pathway is amino-acid biosynthesis; L-tryptophan biosynthesis; L-tryptophan from chorismate: step 4/5. The chain is Indole-3-glycerol phosphate synthase from Campylobacter curvus (strain 525.92).